We begin with the raw amino-acid sequence, 438 residues long: sn-glycerol-3-phosphate-binding periplasmic protein UgpB (438 aa).

An N-terminal signal peptide occupies residues 1-23; the sequence is MISLRHTALGLALSLAFTGQALA. 7 residues coordinate sn-glycerol 3-phosphate: Tyr65, Glu89, Ser144, Ser270, Gly307, Tyr346, and Arg397.

Belongs to the bacterial solute-binding protein 1 family. In terms of assembly, the complex is composed of two ATP-binding proteins (UgpC), two transmembrane proteins (UgpA and UgpE) and a solute-binding protein (UgpB).

The protein resides in the periplasm. In terms of biological role, part of the ABC transporter complex UgpBAEC involved in sn-glycerol-3-phosphate (G3P) import. Binds G3P. This is sn-glycerol-3-phosphate-binding periplasmic protein UgpB (ugpB) from Salmonella typhi.